A 385-amino-acid chain; its full sequence is Alkanesulfonate monooxygenase (385 aa).

Belongs to the SsuD family.

The enzyme catalyses an alkanesulfonate + FMNH2 + O2 = an aldehyde + FMN + sulfite + H2O + 2 H(+). Catalyzes the desulfonation of aliphatic sulfonates. This Burkholderia pseudomallei (strain 1710b) protein is Alkanesulfonate monooxygenase.